A 227-amino-acid chain; its full sequence is Lipoprotein-releasing system ATP-binding protein LolD (227 aa).

The region spanning 7-227 (LSCRDLGKSY…HLQEGHLVAI (221 aa)) is the ABC transporter domain. 43-50 (GTSGSGKS) contacts ATP.

It belongs to the ABC transporter superfamily. Lipoprotein translocase (TC 3.A.1.125) family. As to quaternary structure, the complex is composed of two ATP-binding proteins (LolD) and two transmembrane proteins (LolC and LolE).

Its subcellular location is the cell inner membrane. In terms of biological role, part of the ABC transporter complex LolCDE involved in the translocation of mature outer membrane-directed lipoproteins, from the inner membrane to the periplasmic chaperone, LolA. Responsible for the formation of the LolA-lipoprotein complex in an ATP-dependent manner. The sequence is that of Lipoprotein-releasing system ATP-binding protein LolD from Pseudomonas fluorescens (strain ATCC BAA-477 / NRRL B-23932 / Pf-5).